A 104-amino-acid chain; its full sequence is Large ribosomal subunit protein bL21 (104 aa).

This sequence belongs to the bacterial ribosomal protein bL21 family. In terms of assembly, part of the 50S ribosomal subunit. Contacts protein L20.

This protein binds to 23S rRNA in the presence of protein L20. The chain is Large ribosomal subunit protein bL21 from Elusimicrobium minutum (strain Pei191).